The following is a 424-amino-acid chain: Histidine--tRNA ligase (424 aa).

It belongs to the class-II aminoacyl-tRNA synthetase family. As to quaternary structure, homodimer.

The protein localises to the cytoplasm. The enzyme catalyses tRNA(His) + L-histidine + ATP = L-histidyl-tRNA(His) + AMP + diphosphate + H(+). The polypeptide is Histidine--tRNA ligase (Shewanella denitrificans (strain OS217 / ATCC BAA-1090 / DSM 15013)).